A 265-amino-acid polypeptide reads, in one-letter code: Undecaprenyl-diphosphatase (265 aa).

A run of 7 helical transmembrane segments spans residues 41–61 (IAYT…LIYF), 75–95 (LKFL…LYVI), 104–124 (YNPS…GIYI), 137–157 (LSTK…LPGV), 180–200 (YSYL…LLFT), 215–235 (GIAL…GFLL), and 244–264 (YLID…GLII).

This sequence belongs to the UppP family.

Its subcellular location is the cell membrane. It carries out the reaction di-trans,octa-cis-undecaprenyl diphosphate + H2O = di-trans,octa-cis-undecaprenyl phosphate + phosphate + H(+). In terms of biological role, catalyzes the dephosphorylation of undecaprenyl diphosphate (UPP). The protein is Undecaprenyl-diphosphatase of Saccharolobus islandicus (strain Y.N.15.51 / Yellowstone #2) (Sulfolobus islandicus).